A 921-amino-acid polypeptide reads, in one-letter code: Valine--tRNA ligase (921 aa).

Positions 40-50 match the 'HIGH' region motif; it reads PNVTGSLHMGH. Positions 522-526 match the 'KMSKS' region motif; that stretch reads KMSKS. Lys-525 is an ATP binding site. Residues 849–921 are a coiled coil; it reads MADLIDKEAE…LQHKNRIESL (73 aa).

Belongs to the class-I aminoacyl-tRNA synthetase family. ValS type 1 subfamily. Monomer.

Its subcellular location is the cytoplasm. The catalysed reaction is tRNA(Val) + L-valine + ATP = L-valyl-tRNA(Val) + AMP + diphosphate. Catalyzes the attachment of valine to tRNA(Val). As ValRS can inadvertently accommodate and process structurally similar amino acids such as threonine, to avoid such errors, it has a 'posttransfer' editing activity that hydrolyzes mischarged Thr-tRNA(Val) in a tRNA-dependent manner. This Legionella pneumophila (strain Lens) protein is Valine--tRNA ligase.